The primary structure comprises 200 residues: 2-phospho-L-lactate guanylyltransferase (200 aa).

The protein belongs to the CofC family. In terms of assembly, homodimer.

It catalyses the reaction (2S)-2-phospholactate + GTP + H(+) = (2S)-lactyl-2-diphospho-5'-guanosine + diphosphate. Its pathway is cofactor biosynthesis; coenzyme F420 biosynthesis. Guanylyltransferase that catalyzes the activation of (2S)-2-phospholactate (2-PL) as (2S)-lactyl-2-diphospho-5'-guanosine, via the condensation of 2-PL with GTP. It is involved in the biosynthesis of coenzyme F420, a hydride carrier cofactor. This chain is 2-phospho-L-lactate guanylyltransferase, found in Ferroglobus placidus (strain DSM 10642 / AEDII12DO).